The primary structure comprises 172 residues: MDLKSLVRDIPDFPKPGILFRDITTLLRDPEGLRYTIDFLTQKCKEAEIKPDYVIGIESRGFIFGSPLAYQLGAGFIPIRKRGKLPAAVHSIEYDLEYGTDCLEVHQDALRHSSRVLIVDDLIATGGTASATAKLVQKIGCELVGFGFIIELRDLEGRKYLPDVPIISLIEY.

Belongs to the purine/pyrimidine phosphoribosyltransferase family. Homodimer.

Its subcellular location is the cytoplasm. It carries out the reaction AMP + diphosphate = 5-phospho-alpha-D-ribose 1-diphosphate + adenine. It participates in purine metabolism; AMP biosynthesis via salvage pathway; AMP from adenine: step 1/1. Catalyzes a salvage reaction resulting in the formation of AMP, that is energically less costly than de novo synthesis. The chain is Adenine phosphoribosyltransferase from Nostoc punctiforme (strain ATCC 29133 / PCC 73102).